We begin with the raw amino-acid sequence, 72 residues long: SRY-related protein ADW4 (72 aa).

Positions 1–69 form a DNA-binding region, HMG box; it reads VKRPMNAFMV…KHMADYPNYK (69 aa).

It is found in the nucleus. In Alligator mississippiensis (American alligator), this protein is SRY-related protein ADW4.